The sequence spans 1333 residues: DNA-directed RNA polymerase subunit beta' (1333 aa).

The Zn(2+) site is built by Cys60, Cys62, Cys75, and Cys78. Asp535, Asp537, and Asp539 together coordinate Mg(2+). Positions 901, 983, 990, and 993 each coordinate Zn(2+).

The protein belongs to the RNA polymerase beta' chain family. In terms of assembly, the RNAP catalytic core consists of 2 alpha, 1 beta, 1 beta' and 1 omega subunit. When a sigma factor is associated with the core the holoenzyme is formed, which can initiate transcription. Mg(2+) serves as cofactor. Requires Zn(2+) as cofactor.

The catalysed reaction is RNA(n) + a ribonucleoside 5'-triphosphate = RNA(n+1) + diphosphate. Its function is as follows. DNA-dependent RNA polymerase catalyzes the transcription of DNA into RNA using the four ribonucleoside triphosphates as substrates. In Corynebacterium efficiens (strain DSM 44549 / YS-314 / AJ 12310 / JCM 11189 / NBRC 100395), this protein is DNA-directed RNA polymerase subunit beta'.